The primary structure comprises 626 residues: Dynein, cytoplasmic 1, intermediate chain 2a (626 aa).

Basic and acidic residues predominate over residues 20–43 (QIREEKKRKEEERKKKEAELKKDA). Disordered regions lie at residues 20-108 (QIRE…RTLH) and 142-197 (KEVV…HELT). Positions 82-99 (TAKSVGSPSEAGSQDSGD) are enriched in polar residues. The span at 160-169 (KDEEDEEEET) shows a compositional bias: acidic residues. Residues 177–197 (ETEKEKPEEKQVEEALPHELT) are compositionally biased toward basic and acidic residues. WD repeat units lie at residues 265–314 (SKQR…ATPE), 318–358 (HCQS…RTPV), 367–408 (AHTH…QPQD), 417–457 (SKSV…AGIS), 462–507 (GHHG…PLYS), 510–550 (DNSD…EVPT), and 556–595 (DGSP…AVPR).

This sequence belongs to the dynein intermediate chain family. In terms of assembly, homodimer. The cytoplasmic dynein 1 complex consists of two catalytic heavy chains (HCs) and a number of non-catalytic subunits presented by intermediate chains (ICs), light intermediate chains (LICs) and light chains (LCs); the composition seems to vary in respect to the IC, LIC and LC composition. The heavy chain homodimer serves as a scaffold for the probable homodimeric assembly of the respective non-catalytic subunits. The ICs and LICs bind directly to the HC dimer and the LCs assemble on the IC dimer.

The protein localises to the cytoplasm. The protein resides in the cytoskeleton. Its function is as follows. Acts as one of several non-catalytic accessory components of the cytoplasmic dynein 1 complex that are thought to be involved in linking dynein to cargos and to adapter proteins that regulate dynein function. Cytoplasmic dynein 1 acts as a motor for the intracellular retrograde motility of vesicles and organelles along microtubules. Plays a role in the development of anterior brain and cartilaginous structures. This chain is Dynein, cytoplasmic 1, intermediate chain 2a (dync1i2a), found in Danio rerio (Zebrafish).